Reading from the N-terminus, the 1063-residue chain is Kinesin-like protein KIN-7H (1063 aa).

The Kinesin motor domain maps to 18–342 (KIYVSVRMRP…LLFASCAKEV (325 aa)). 106–113 (GQTSSGKT) serves as a coordination point for ATP. Residues 351 to 436 (VMSDKALVKH…KNQEKETLST (86 aa)) are a coiled coil. The tract at residues 574–664 (SDISIGPVEN…ESNLTKNPAL (91 aa)) is disordered.

It belongs to the TRAFAC class myosin-kinesin ATPase superfamily. Kinesin family. KIN-7 subfamily.

The protein is Kinesin-like protein KIN-7H of Arabidopsis thaliana (Mouse-ear cress).